The sequence spans 473 residues: G2/mitotic-specific cyclin-1 (473 aa).

Residues 1 to 12 are compositionally biased toward polar residues; that stretch reads MGSRNIVQQQNR. Disordered stretches follow at residues 1 to 23 and 134 to 155; these read MGSR…AMKQ and KEKP…APTL. Residues 134-147 show a composition bias toward basic and acidic residues; sequence KEKPIEKEKAAEKS.

It belongs to the cyclin family. Cyclin AB subfamily. In terms of assembly, interacts with the CDC2 and CDK2 protein kinases to form a serine/threonine kinase holoenzyme complex. The cyclin subunit imparts substrate specificity to the complex.

Essential for the control of the cell cycle at the G2/M (mitosis) transition. G2/M cyclins accumulate steadily during G2 and are abruptly destroyed at mitosis. In Antirrhinum majus (Garden snapdragon), this protein is G2/mitotic-specific cyclin-1.